Reading from the N-terminus, the 334-residue chain is L-lactate dehydrogenase B chain (334 aa).

Position 2 is an N-acetylalanine (Ala2). N6-acetyllysine is present on Lys7. A phosphoserine mark is found at Ser11 and Ser44. NAD(+) contacts are provided by residues 30–58 (GQVG…LEDK) and Arg100. Lys58 carries the N6-acetyllysine modification. Residue Arg107 participates in substrate binding. Lys119 is subject to N6-acetyllysine. Residue Asn139 participates in NAD(+) binding. Residues Asn139 and Arg170 each coordinate substrate. Residue His194 is the Proton acceptor of the active site. Tyr240 is modified (phosphotyrosine). Position 249 (Thr249) interacts with substrate. An N6-acetyllysine modification is found at Lys329.

It belongs to the LDH/MDH superfamily. LDH family. As to quaternary structure, homotetramer. Interacts with PTEN upstream reading frame protein MP31; the interaction leads to inhibition of mitochondrial lactate dehydrogenase activity, preventing conversion of lactate to pyruvate in mitochondria.

It localises to the cytoplasm. It is found in the mitochondrion inner membrane. The enzyme catalyses (S)-lactate + NAD(+) = pyruvate + NADH + H(+). The protein operates within fermentation; pyruvate fermentation to lactate; (S)-lactate from pyruvate: step 1/1. In terms of biological role, interconverts simultaneously and stereospecifically pyruvate and lactate with concomitant interconversion of NADH and NAD(+). The sequence is that of L-lactate dehydrogenase B chain (Ldhb) from Mus musculus (Mouse).